The following is a 348-amino-acid chain: Phosphoribosylformylglycinamidine cyclo-ligase (348 aa).

This sequence belongs to the AIR synthase family.

It localises to the cytoplasm. The enzyme catalyses 2-formamido-N(1)-(5-O-phospho-beta-D-ribosyl)acetamidine + ATP = 5-amino-1-(5-phospho-beta-D-ribosyl)imidazole + ADP + phosphate + H(+). The protein operates within purine metabolism; IMP biosynthesis via de novo pathway; 5-amino-1-(5-phospho-D-ribosyl)imidazole from N(2)-formyl-N(1)-(5-phospho-D-ribosyl)glycinamide: step 2/2. This chain is Phosphoribosylformylglycinamidine cyclo-ligase, found in Citrifermentans bemidjiense (strain ATCC BAA-1014 / DSM 16622 / JCM 12645 / Bem) (Geobacter bemidjiensis).